The following is a 444-amino-acid chain: DNA repair protein RadA (444 aa).

The segment at 8–25 (CSNCGNISPKWSGQCFDC) adopts a C4-type zinc-finger fold. 89–96 (GDPGIGKS) serves as a coordination point for ATP. A RadA KNRFG motif motif is present at residues 248–252 (KNRFG). The tract at residues 347 to 444 (EVYLSIAGGL…HLKDLKEIIK (98 aa)) is lon-protease-like.

It belongs to the RecA family. RadA subfamily.

In terms of biological role, DNA-dependent ATPase involved in processing of recombination intermediates, plays a role in repairing DNA breaks. Stimulates the branch migration of RecA-mediated strand transfer reactions, allowing the 3' invading strand to extend heteroduplex DNA faster. Binds ssDNA in the presence of ADP but not other nucleotides, has ATPase activity that is stimulated by ssDNA and various branched DNA structures, but inhibited by SSB. Does not have RecA's homology-searching function. This Rickettsia conorii (strain ATCC VR-613 / Malish 7) protein is DNA repair protein RadA.